Consider the following 247-residue polypeptide: MTILFLTMVISYFGCMKAAPMKEANIRGQGGLAYPGVRTHGTLESVNGPKAGSRGLTSLADTFEHVIEELLDEDQKVRPNEENNKDADLYTSRVMLSSQVPLEPPLLFLLEEYKNYLDAANMSMRVRRHSDPARRGELSVCDSISEWVTAADKKTAVDMSGGTVTVLEKVPVSKGQLKQYFYETKCNPMGYTKEGCRGIDKRHWNSQCRTTQSYVRALTMDSKKRIGWRFIRIDTSCVCTLTIKRGR.

The signal sequence occupies residues 1-18 (MTILFLTMVISYFGCMKA). Positions 19–128 (APMKEANIRG…AANMSMRVRR (110 aa)) are excised as a propeptide. Asn121 carries N-linked (GlcNAc...) asparagine glycosylation. Disulfide bonds link Cys141/Cys208, Cys186/Cys237, and Cys196/Cys239.

The protein belongs to the NGF-beta family. Monomers and homodimers. Binds to NTRK2/TRKB. Can form heterodimers with other neurotrophin family members, such as NTF3 and NTF4 (in vitro), but the physiological relevance of this is not clear. BDNF precursor form: interacts with the heterodimer formed by NGFR and SORCS2. Post-translationally, N-glycosylated and glycosulfated, contrary to mature BDNF. Mature BDNF is produced by proteolytic removal of the propeptide, catalyzed by a FURIN family member. In addition, the precursor form is proteolytically cleaved within the propeptide, but this is not an obligatory intermediate for the production of mature BDNF. Can be converted into mature BDNF by plasmin (PLG). As to expression, detected in blood plasma and in saliva (at protein level). Brain. Highly expressed in hippocampus, amygdala, cerebral cortex and cerebellum. Also expressed in heart, lung, skeletal muscle, testis, prostate and placenta.

It localises to the secreted. In terms of biological role, important signaling molecule that activates signaling cascades downstream of NTRK2. During development, promotes the survival and differentiation of selected neuronal populations of the peripheral and central nervous systems. Participates in axonal growth, pathfinding and in the modulation of dendritic growth and morphology. Major regulator of synaptic transmission and plasticity at adult synapses in many regions of the CNS. The versatility of BDNF is emphasized by its contribution to a range of adaptive neuronal responses including long-term potentiation (LTP), long-term depression (LTD), certain forms of short-term synaptic plasticity, as well as homeostatic regulation of intrinsic neuronal excitability. Functionally, important signaling molecule that activates signaling cascades downstream of NTRK2. Activates signaling cascades via the heterodimeric receptor formed by NGFR and SORCS2. Signaling via NGFR and SORCS2 plays a role in synaptic plasticity and long-term depression (LTD). Binding to NGFR and SORCS2 promotes neuronal apoptosis. Promotes neuronal growth cone collapse. The polypeptide is Neurotrophic factor BDNF precursor form (Homo sapiens (Human)).